The chain runs to 247 residues: ATP synthase subunit a, chloroplastic (247 aa).

5 helical membrane passes run 38–58, 95–115, 134–154, 199–219, and 220–240; these read QVLI…IIAV, VPFI…GALL, INTT…AGLT, LVVV…VMFL, and GLFT…AYIG.

This sequence belongs to the ATPase A chain family. F-type ATPases have 2 components, CF(1) - the catalytic core - and CF(0) - the membrane proton channel. CF(1) has five subunits: alpha(3), beta(3), gamma(1), delta(1), epsilon(1). CF(0) has four main subunits: a, b, b' and c.

The protein localises to the plastid. Its subcellular location is the chloroplast thylakoid membrane. Its function is as follows. Key component of the proton channel; it plays a direct role in the translocation of protons across the membrane. The protein is ATP synthase subunit a, chloroplastic of Dioscorea elephantipes (Elephant's foot yam).